Reading from the N-terminus, the 227-residue chain is Orotidine 5'-phosphate decarboxylase (227 aa).

Residues aspartate 8, lysine 30, 57–66 (DLKFHDIPNT), threonine 116, arginine 177, glutamine 186, glycine 206, and arginine 207 each bind substrate. The active-site Proton donor is the lysine 59.

Belongs to the OMP decarboxylase family. Type 1 subfamily. In terms of assembly, homodimer.

The catalysed reaction is orotidine 5'-phosphate + H(+) = UMP + CO2. Its pathway is pyrimidine metabolism; UMP biosynthesis via de novo pathway; UMP from orotate: step 2/2. Catalyzes the decarboxylation of orotidine 5'-monophosphate (OMP) to uridine 5'-monophosphate (UMP). The protein is Orotidine 5'-phosphate decarboxylase of Acinetobacter baylyi (strain ATCC 33305 / BD413 / ADP1).